The primary structure comprises 453 residues: Phosphoglucosamine mutase (453 aa).

Residue Ser-102 is the Phosphoserine intermediate of the active site. Mg(2+) contacts are provided by Ser-102, Asp-243, Asp-245, and Asp-247. Ser-102 is modified (phosphoserine).

It belongs to the phosphohexose mutase family. The cofactor is Mg(2+). In terms of processing, activated by phosphorylation.

The catalysed reaction is alpha-D-glucosamine 1-phosphate = D-glucosamine 6-phosphate. Catalyzes the conversion of glucosamine-6-phosphate to glucosamine-1-phosphate. The polypeptide is Phosphoglucosamine mutase (Bartonella tribocorum (strain CIP 105476 / IBS 506)).